A 571-amino-acid chain; its full sequence is Probable serine/threonine-protein kinase WNK4 (571 aa).

The Protein kinase domain maps to 19–277; that stretch reads GRFAEILGRG…AKELLQDPFL (259 aa). ATP contacts are provided by residues 99-102 and K149; that span reads TELF. Catalysis depends on D166, which acts as the Proton acceptor. Residues 396–425 form a disordered region; the sequence is EDDETPHDHHRHRTDSFHSSSSHASSSQAS. The segment covering 412-425 has biased composition (low complexity); the sequence is FHSSSSHASSSQAS. S522 is subject to Phosphoserine.

It belongs to the protein kinase superfamily. Ser/Thr protein kinase family. WNK subfamily.

The catalysed reaction is L-seryl-[protein] + ATP = O-phospho-L-seryl-[protein] + ADP + H(+). The enzyme catalyses L-threonyl-[protein] + ATP = O-phospho-L-threonyl-[protein] + ADP + H(+). May regulate flowering time by modulating the photoperiod pathway. The sequence is that of Probable serine/threonine-protein kinase WNK4 (WNK4) from Arabidopsis thaliana (Mouse-ear cress).